We begin with the raw amino-acid sequence, 682 residues long: Potassium-transporting ATPase ATP-binding subunit (682 aa).

The next 4 membrane-spanning stretches (helical) occupy residues 35 to 55, 62 to 82, 219 to 239, and 254 to 274; these read VMFIVWVGSLLTTLLAIAMAG, ATFTAAVSIWLWFTVLFANFA, IALTILLIALTLVFLLATATI, and VLVALLVCLIPTTIGGLLSAI. The active-site 4-aspartylphosphate intermediate is aspartate 307. ATP is bound by residues aspartate 344, glutamate 348, 377-384, and lysine 395; that span reads FTAQTRMS. Aspartate 518 and aspartate 522 together coordinate Mg(2+). A run of 3 helical transmembrane segments spans residues 588–608, 616–636, and 656–676; these read FAIIPAAFAAVYPQLAMLNVM, AILSAVIFNALIIVFLIPLAL, and IYGLGGLLVPFIGIKAIDLLL.

This sequence belongs to the cation transport ATPase (P-type) (TC 3.A.3) family. Type IA subfamily. In terms of assembly, the system is composed of three essential subunits: KdpA, KdpB and KdpC.

The protein resides in the cell inner membrane. It carries out the reaction K(+)(out) + ATP + H2O = K(+)(in) + ADP + phosphate + H(+). In terms of biological role, part of the high-affinity ATP-driven potassium transport (or Kdp) system, which catalyzes the hydrolysis of ATP coupled with the electrogenic transport of potassium into the cytoplasm. This subunit is responsible for energy coupling to the transport system and for the release of the potassium ions to the cytoplasm. The protein is Potassium-transporting ATPase ATP-binding subunit of Klebsiella pneumoniae (strain 342).